Here is a 683-residue protein sequence, read N- to C-terminus: MESEKIIEERLKALRSTIALHDFHYYVQDAPIIPDADYDKLFRTLQQLEQQYPHLITPDSPTQRVGAPPLKVFARLTHQTPMLSLTNAFTEDEAIAFDKRIREALNVDQVNYAVEPKFDGLAVSLVYTNGILTNGATRGDGYTGEDITLNLRTIPSIPLRLQTATVTDQFEVRGEVVMLKADFEHLNEQQRNKGEKLFANPRNAAAGSLRQLDSNITAARKLTFFAYDAVLSHKDQPFFSKHSEILDYLKSQQFLVAQQNGTTTGVAGLLTYYHEMGALRLSLPYEIDGVVYKVDNLTQQETLGYVSRAPRFAIAHKFPAQEASTELLTIEIQVGRTGALTPVARLAPVFVGGVTVTNATLHNEDEVQRKQIMIGDTVIVRRAGDVIPEVVAVIPEQRPAHAQPFIMPDHCPVCGSKAARLPGEAVTRCTGGLYCPAQRKQAIWHFASRRALDIDGLGEKLIDQLIDRELVHTPADLYKLNIDTLASLERMAEKSARNLVTAIEHSKKTTLPRFIYALGIRHVGEATAKALANQASHLDQLMTLDIEQLQQIPDVGPIVAQSIIDFFSEAHNREVIRQLLDSGLQWEIPNHGVQQSEQTNSAVSGKTFVLTGTLPTMTRDQAKIKIEQQGGKVTGSVSSATSYVVAGSDPGSKYAKAIGLGISVLDEDQLLSLLQNISTGAQQ.

Residues 35–39 (DADYD), 84–85 (SL), and Glu115 contribute to the NAD(+) site. Catalysis depends on Lys117, which acts as the N6-AMP-lysine intermediate. NAD(+) is bound by residues Arg138, Glu175, Lys293, and Lys317. Zn(2+)-binding residues include Cys411, Cys414, Cys429, and Cys435. A BRCT domain is found at 598 to 683 (QTNSAVSGKT…LQNISTGAQQ (86 aa)).

This sequence belongs to the NAD-dependent DNA ligase family. LigA subfamily. Mg(2+) serves as cofactor. The cofactor is Mn(2+).

The catalysed reaction is NAD(+) + (deoxyribonucleotide)n-3'-hydroxyl + 5'-phospho-(deoxyribonucleotide)m = (deoxyribonucleotide)n+m + AMP + beta-nicotinamide D-nucleotide.. DNA ligase that catalyzes the formation of phosphodiester linkages between 5'-phosphoryl and 3'-hydroxyl groups in double-stranded DNA using NAD as a coenzyme and as the energy source for the reaction. It is essential for DNA replication and repair of damaged DNA. The polypeptide is DNA ligase (Nitrosomonas eutropha (strain DSM 101675 / C91 / Nm57)).